An 871-amino-acid chain; its full sequence is DNA mismatch repair protein MutS (871 aa).

630 to 637 (GPNMGGKS) is an ATP binding site. Residues 830–849 (KEEPESKSASPVEAALAGIN) form a disordered region.

This sequence belongs to the DNA mismatch repair MutS family.

Functionally, this protein is involved in the repair of mismatches in DNA. It is possible that it carries out the mismatch recognition step. This protein has a weak ATPase activity. The chain is DNA mismatch repair protein MutS from Verminephrobacter eiseniae (strain EF01-2).